Here is a 394-residue protein sequence, read N- to C-terminus: Elongation factor Tu (394 aa).

Positions Lys10–Glu204 constitute a tr-type G domain. The segment at Gly19–Thr26 is G1. A GTP-binding site is contributed by Gly19–Thr26. Thr26 contacts Mg(2+). Positions Gly60–Asn64 are G2. The segment at Asp81 to Gly84 is G3. Residues Asp81 to His85 and Asn136 to Asp139 contribute to the GTP site. Positions Asn136–Asp139 are G4. Residues Ser174–Leu176 are G5.

It belongs to the TRAFAC class translation factor GTPase superfamily. Classic translation factor GTPase family. EF-Tu/EF-1A subfamily. In terms of assembly, monomer.

It is found in the cytoplasm. It catalyses the reaction GTP + H2O = GDP + phosphate + H(+). In terms of biological role, GTP hydrolase that promotes the GTP-dependent binding of aminoacyl-tRNA to the A-site of ribosomes during protein biosynthesis. The protein is Elongation factor Tu of Aeromonas hydrophila subsp. hydrophila (strain ATCC 7966 / DSM 30187 / BCRC 13018 / CCUG 14551 / JCM 1027 / KCTC 2358 / NCIMB 9240 / NCTC 8049).